We begin with the raw amino-acid sequence, 140 residues long: MRTSVFVALVVATFVATCISFTSAKNVAQIRDVDGGNNVQETRTLAEADDWWLASTNTEERSGGAGFFSKLRGKVHAKQSSGVMTTQKLNDQQVKTITKEVATTVKKDRRTWPMIKKGLKILYGALLAGLIIVGVEAMLS.

Positions 1–24 (MRTSVFVALVVATFVATCISFTSA) are cleaved as a signal peptide. The RxLR-dEER signature appears at 43-61 (RTLAEADDWWLASTNTEER). Residues 119–139 (LKILYGALLAGLIIVGVEAML) traverse the membrane as a helical segment.

Belongs to the RxLR effector family.

The protein resides in the secreted. It localises to the host cell. It is found in the membrane. In terms of biological role, effector that is involved in host plant infection. Contributes to virulence during the early infection stage, by inhibiting plant defense responses induced by both PAMP-triggered immunity (PTI) and effector-triggered immunity (ETI). This is RxLR effector protein CRE9 from Phytophthora infestans (strain T30-4) (Potato late blight agent).